The following is a 107-amino-acid chain: RNA polymerase II transcriptional coactivator KIWI (107 aa).

The segment at 1–40 (MSSRGKRKDEDVRASDDESETHAPAKKVAKPADDSDQSDD) is disordered. The span at 7–23 (RKDEDVRASDDESETHA) shows a compositional bias: basic and acidic residues.

The protein belongs to the transcriptional coactivator PC4 family.

The protein resides in the nucleus. Its function is as follows. General coactivator that functions cooperatively with TAFs and mediates functional interactions between upstream activators and the general transcriptional machinery. Binds single-stranded DNA. The polypeptide is RNA polymerase II transcriptional coactivator KIWI (KIWI) (Arabidopsis thaliana (Mouse-ear cress)).